The following is a 378-amino-acid chain: L-asparaginase-like protein GF11609 (378 aa).

The first 21 residues, 1-21 (MCSPLPLLILRLLLLTHPSLG), serve as a signal peptide directing secretion. 3 cysteine pairs are disulfide-bonded: C71–C76, C170–C186, and C325–C352.

The protein belongs to the Ntn-hydrolase family.

In Drosophila ananassae (Fruit fly), this protein is L-asparaginase-like protein GF11609.